Consider the following 329-residue polypeptide: Malate dehydrogenase (329 aa).

G13–S19 is an NAD(+) binding site. R94 and R100 together coordinate substrate. NAD(+) is bound by residues N107, Q114, and V131–N133. Positions 133 and 164 each coordinate substrate. The active-site Proton acceptor is H189.

Belongs to the LDH/MDH superfamily. MDH type 2 family.

The enzyme catalyses (S)-malate + NAD(+) = oxaloacetate + NADH + H(+). Catalyzes the reversible oxidation of malate to oxaloacetate. The sequence is that of Malate dehydrogenase from Psychrobacter arcticus (strain DSM 17307 / VKM B-2377 / 273-4).